A 561-amino-acid polypeptide reads, in one-letter code: MRFSRLYAPTLREDPSDAEIPSQALLQRAGFIRKIAAGVYTYLPLARRTLLKIENIVREEMDKIGAQEILMPIIQPAELWQRSGRWDDYGPEMMKLKDRHNRDFTLGPTHEELVTELIRNELNSYKQLPVSLYQITTKFRDEIRPRFGVLRAREFIMKDAYSFHDSWESLDETYQLFKDAYSKIMERIGLRYSVIEAATGAIGGNESHEFVAFANTGESNVLYCDCGYAGSDERVPYKGDYEKDDEAEKTLEKVYTPNVRTVEQVAEFLNVPIRKIVKSLVFKGRDGFVMALVPGDRELNFEKLKAYLGDQSLQMAEAEEILEEFGVPIGFLGPVGADKVRIVADYGIKYMKNFVVGGMEKDYHYLNVNLDRDFKVNEWTDLVVVQIGDPCPVCGKPLKGEKGIELGHIFKLGTKYSDSMDVKYMDKDGKMKSFIMGCYGWGISRTLGAIVEQLHDDDGIIWPRSVAPYEVDIVVVGKEKEKEFSEKLYSYLLDKGVDVIIDDRNVSPGVKFKDADLIGFPIRITVGRKLKEGKVEIKERGKEAILVDANMEQILNAINEM.

This sequence belongs to the class-II aminoacyl-tRNA synthetase family. ProS type 1 subfamily. In terms of assembly, homodimer.

Its subcellular location is the cytoplasm. It carries out the reaction tRNA(Pro) + L-proline + ATP = L-prolyl-tRNA(Pro) + AMP + diphosphate. In terms of biological role, catalyzes the attachment of proline to tRNA(Pro) in a two-step reaction: proline is first activated by ATP to form Pro-AMP and then transferred to the acceptor end of tRNA(Pro). As ProRS can inadvertently accommodate and process non-cognate amino acids such as alanine and cysteine, to avoid such errors it has two additional distinct editing activities against alanine. One activity is designated as 'pretransfer' editing and involves the tRNA(Pro)-independent hydrolysis of activated Ala-AMP. The other activity is designated 'posttransfer' editing and involves deacylation of mischarged Ala-tRNA(Pro). The misacylated Cys-tRNA(Pro) is not edited by ProRS. The protein is Proline--tRNA ligase of Thermosipho africanus (strain TCF52B).